We begin with the raw amino-acid sequence, 56 residues long: Endoglucanase Cel5A (56 aa).

Glutamate 45 acts as the Nucleophile in catalysis.

It belongs to the glycosyl hydrolase 5 (cellulase A) family.

It localises to the secreted. It is found in the extracellular space. The catalysed reaction is Endohydrolysis of (1-&gt;4)-beta-D-glucosidic linkages in cellulose, lichenin and cereal beta-D-glucans.. In terms of biological role, has avicelase and carboxymethylcellulase activity. The protein is Endoglucanase Cel5A of Gloeophyllum trabeum (Brown rot fungus).